The following is a 50-amino-acid chain: Large ribosomal subunit protein bL33B (50 aa).

Belongs to the bacterial ribosomal protein bL33 family.

In Ligilactobacillus salivarius (strain UCC118) (Lactobacillus salivarius), this protein is Large ribosomal subunit protein bL33B.